A 478-amino-acid chain; its full sequence is uncharacterized protein (478 aa).

Residues 5–85 (KRIYVGGLSS…SKLRIEEARP (81 aa)) form the RRM domain. S207 and S308 each carry phosphoserine.

It is found in the nucleus. The protein localises to the nucleolus. This is an uncharacterized protein from Schizosaccharomyces pombe (strain 972 / ATCC 24843) (Fission yeast).